A 427-amino-acid chain; its full sequence is MAIQIFKVGLKDHSVLDPVLKRAREDLSSTLALVKPIVEDVKNRGDSALREYTQKFDEVIPPKSFVLEISKLNPKIDPKLKTALVKAAKNIRNFHKIQIPENKEIIIHGNKLGILHTPIESVSVYAPGGKALYPSTILMGVIPAKLAGVKNIQIVTPPRKGTLPDGLIAAAKIAGADRIVMAGGAQGIAAVSYGTESIPSSEFVVGPGNKFVTAAKVYLSGQGVIGIDSPAGPSEVLIIADDSADPMWVAADLLSQAEHGEDSVAILCTNSLSLAQKVKEEVEKALIERPKRGEMKRKSIKDHGKIFVFSNLEECFVFSNLFAPEHLEIQTKNFKKDLKKVKHAGSVFLGNYSPVAMGDYISGTNHILPTAGAARIYSSLGVSTFLKRVTWQEVSKKSIQNLYPHVKVLSEFEGLDEEHGNSVRIRR.

3 residues coordinate NAD(+): tyrosine 125, glutamine 186, and asparagine 209. Serine 234, glutamine 256, and histidine 259 together coordinate substrate. Residues glutamine 256 and histidine 259 each coordinate Zn(2+). Residues glutamate 325 and histidine 326 each act as proton acceptor in the active site. Residues histidine 326, aspartate 359, glutamate 413, and histidine 419 each contribute to the substrate site. Aspartate 359 lines the Zn(2+) pocket. Residue histidine 419 participates in Zn(2+) binding.

Belongs to the histidinol dehydrogenase family. Requires Zn(2+) as cofactor.

It carries out the reaction L-histidinol + 2 NAD(+) + H2O = L-histidine + 2 NADH + 3 H(+). It functions in the pathway amino-acid biosynthesis; L-histidine biosynthesis; L-histidine from 5-phospho-alpha-D-ribose 1-diphosphate: step 9/9. Catalyzes the sequential NAD-dependent oxidations of L-histidinol to L-histidinaldehyde and then to L-histidine. This is Histidinol dehydrogenase from Leptospira interrogans serogroup Icterohaemorrhagiae serovar Lai (strain 56601).